The primary structure comprises 321 residues: Ferredoxin--NADP reductase (321 aa).

Residues E33, Q41, Y46, V86, L119, D277, and S318 each contribute to the FAD site.

This sequence belongs to the ferredoxin--NADP reductase type 2 family. In terms of assembly, homodimer. FAD is required as a cofactor.

It catalyses the reaction 2 reduced [2Fe-2S]-[ferredoxin] + NADP(+) + H(+) = 2 oxidized [2Fe-2S]-[ferredoxin] + NADPH. In Lactococcus lactis subsp. cremoris (strain SK11), this protein is Ferredoxin--NADP reductase.